We begin with the raw amino-acid sequence, 642 residues long: MTLLESVQSPADVKRLEHGELAKLAAEIRSFLIEKVSRTGGHLGPNLGAIELTLAVHRVFDSPRDAVVFDTGHQAYVHKIVTGRQSGFDRLRKRDGISGYPSRAESEHDLVENSHASTALSYADGLARAFQLGSEQRHVVAVVGDGALTGGMCWEALNNIAADPDRPVVIVVNDNGRSYAPTIGGLAEHLAGLRLKPGYERALESGRRTLQNLPVVGRSLYTGLHAAKSGIKDALSPQVMFSDLGIKYLGPVDGHDLRSMEQALSMAKAFGGPVIVHAVTRKGNGFAPAENDVAEQMHQVKVIDPETGIPTKPAPKIWTDVYSDELVRIGAEREDVVAITAAMLGPTGLDKFAAAYPERCYDVGIAEQHAMTSAAGMAMGGLHPVFAVYSTFLNRAFDQLLMDVALHRQPVTVTLDRSGITGDDGASHNGMWDLSILGAIPGIQVAAPRDAVTLREELREAVAVDDGPTVMRFPKGSVIEEVPAVERIGGVDVLSKPASDERSEVLLAAVGAFGQLGVAVAERLAAQGIGVTVVDPRWVVPVPQAVLDLAARHSLVVTLEDCGRHGGFGWSLAAAMRDQEIDVPLRDLAVPNRFLQHASRDEVLSDLGLTEQDIARRITEWVAGRLTPVVVGNGRGETATGA.

Thiamine diphosphate-binding positions include histidine 73 and 114–116 (SHA). Mg(2+) is bound at residue aspartate 145. Thiamine diphosphate contacts are provided by residues 146 to 147 (GA), asparagine 175, phenylalanine 286, and glutamate 367. A Mg(2+)-binding site is contributed by asparagine 175.

It belongs to the transketolase family. DXPS subfamily. In terms of assembly, homodimer. It depends on Mg(2+) as a cofactor. Thiamine diphosphate serves as cofactor.

It catalyses the reaction D-glyceraldehyde 3-phosphate + pyruvate + H(+) = 1-deoxy-D-xylulose 5-phosphate + CO2. It participates in metabolic intermediate biosynthesis; 1-deoxy-D-xylulose 5-phosphate biosynthesis; 1-deoxy-D-xylulose 5-phosphate from D-glyceraldehyde 3-phosphate and pyruvate: step 1/1. Functionally, catalyzes the acyloin condensation reaction between C atoms 2 and 3 of pyruvate and glyceraldehyde 3-phosphate to yield 1-deoxy-D-xylulose-5-phosphate (DXP). This Saccharopolyspora erythraea (strain ATCC 11635 / DSM 40517 / JCM 4748 / NBRC 13426 / NCIMB 8594 / NRRL 2338) protein is 1-deoxy-D-xylulose-5-phosphate synthase.